Reading from the N-terminus, the 527-residue chain is Inorganic phosphate transporter 1-1 (527 aa).

Residues 1–21 (MAGGQLNVLSTLDQAKTQWYH) lie on the Cytoplasmic side of the membrane. Residues 22–42 (FMAIVIAGMGFFTDAYDLFCI) traverse the membrane as a helical segment. Residues 43-70 (SLVTKLLGRIYYTDDSKDTPGALPPNVS) lie on the Extracellular side of the membrane. Residues 71-91 (AAVTGVALCGTLAGQLFFGWL) traverse the membrane as a helical segment. Topologically, residues 92 to 99 (GDKLGRKS) are cytoplasmic. A helical membrane pass occupies residues 100–120 (VYGFTLILMVVCSVASGLSFG). Topologically, residues 121 to 124 (SSAK) are extracellular. A helical membrane pass occupies residues 125 to 145 (GVVSTLCFFRFWLGFGIGGDY). Residues 146-163 (PLSATIMSEYANKRTRGA) are Cytoplasmic-facing. A helical membrane pass occupies residues 164–184 (FIAAVFAMQGFGILFGAIVAL). Residues 185–211 (AVSAGFRHAYPAPSYSDNHAASLVPQA) lie on the Extracellular side of the membrane. Residues 212-232 (DYVWRIILMFGTVPAALTYYW) form a helical membrane-spanning segment. At 233 to 292 (RMKMPETARYTALIARNAKQAAADMSKVLHTQIEESADRAETVAVGGESWGLFSRQFLRR) the chain is on the cytoplasmic side. The chain crosses the membrane as a helical span at residues 293–313 (HGLHLLATTSTWFLLDIAFYS). The Extracellular segment spans residues 314–348 (QNLFQKDIFSKVGWIPPAKTMNALEELYRIARAQA). A helical membrane pass occupies residues 349–369 (LIALCGTIPGYWFTVAFIEIM). At 370 to 371 (GR) the chain is on the cytoplasmic side. The helical transmembrane segment at 372 to 392 (FWIQIMGFAMMTAFMLGLAIP) threads the bilayer. Over 393-405 (YHHWTTPGHHTGF) the chain is Extracellular. The helical transmembrane segment at 406–426 (IVMYGFTFFFANFGPNSTTFI) threads the bilayer. Residues 427 to 442 (VPAEIYPARLRSTCHG) are Cytoplasmic-facing. A helical transmembrane segment spans residues 443–463 (ISAAAGKAGAIIGAFGFLYAA). At 464–481 (QDQHKPEPGYPRGIGIKN) the chain is on the extracellular side. Residues 482 to 502 (ALFVLAGTNFLGTIMTLLVPE) form a helical membrane-spanning segment. Residues 503 to 527 (SKGMSLEVISQEVADGDDEEAAYPK) are Cytoplasmic-facing.

The protein belongs to the major facilitator superfamily. Phosphate:H(+) symporter (TC 2.A.1.9) family. In terms of tissue distribution, expressed in roots, stems and leaves.

The protein localises to the membrane. Its function is as follows. High-affinity transporter for external inorganic phosphate. Required for phosphate acquisition in plant. In Oryza sativa subsp. japonica (Rice), this protein is Inorganic phosphate transporter 1-1 (PHT1-1).